A 140-amino-acid polypeptide reads, in one-letter code: Nucleoside diphosphate kinase (140 aa).

Lys11, Phe59, Arg87, Thr93, Arg104, and Asn114 together coordinate ATP. His117 (pros-phosphohistidine intermediate) is an active-site residue.

It belongs to the NDK family. In terms of assembly, homotetramer. Mg(2+) is required as a cofactor.

The protein localises to the cytoplasm. The catalysed reaction is a 2'-deoxyribonucleoside 5'-diphosphate + ATP = a 2'-deoxyribonucleoside 5'-triphosphate + ADP. It carries out the reaction a ribonucleoside 5'-diphosphate + ATP = a ribonucleoside 5'-triphosphate + ADP. In terms of biological role, major role in the synthesis of nucleoside triphosphates other than ATP. The ATP gamma phosphate is transferred to the NDP beta phosphate via a ping-pong mechanism, using a phosphorylated active-site intermediate. The polypeptide is Nucleoside diphosphate kinase (Chelativorans sp. (strain BNC1)).